We begin with the raw amino-acid sequence, 361 residues long: Tetraacyldisaccharide 4'-kinase (361 aa).

68–75 (TVGGTGKT) provides a ligand contact to ATP.

The protein belongs to the LpxK family.

The enzyme catalyses a lipid A disaccharide + ATP = a lipid IVA + ADP + H(+). It functions in the pathway glycolipid biosynthesis; lipid IV(A) biosynthesis; lipid IV(A) from (3R)-3-hydroxytetradecanoyl-[acyl-carrier-protein] and UDP-N-acetyl-alpha-D-glucosamine: step 6/6. Functionally, transfers the gamma-phosphate of ATP to the 4'-position of a tetraacyldisaccharide 1-phosphate intermediate (termed DS-1-P) to form tetraacyldisaccharide 1,4'-bis-phosphate (lipid IVA). The polypeptide is Tetraacyldisaccharide 4'-kinase (Pelobacter propionicus (strain DSM 2379 / NBRC 103807 / OttBd1)).